Consider the following 938-residue polypeptide: Glutamate receptor ionotropic, NMDA 1 (938 aa).

A signal peptide spans 1–18 (MSTMHLLTFALLFSCSFA). Residues 19-559 (RAACDPKIVN…TLDSFMQPFQ (541 aa)) are Extracellular-facing. 10 N-linked (GlcNAc...) asparagine glycosylation sites follow: Asn61, Asn203, Asn239, Asn276, Asn300, Asn350, Asn368, Asn440, Asn471, and Asn491. Cys79 and Cys308 form a disulfide bridge. 2 disulfides stabilise this stretch: Cys420-Cys454 and Cys436-Cys455. Residues Pro516, Thr518, and Arg523 each coordinate glycine. Residues 560-580 (STLWLLVGLSVHVVAVMLYLL) traverse the membrane as a helical segment. The Cytoplasmic portion of the chain corresponds to 581–602 (DRFSPFGRFKVNSEEEEEDALT). An intramembrane region (discontinuously helical) is located at residues 603–624 (LSSAMWFSWGVLLNSGIGEGAP). Positions 603-624 (LSSAMWFSWGVLLNSGIGEGAP) are pore-forming. Residues 625–630 (RSFSAR) lie on the Cytoplasmic side of the membrane. The helical transmembrane segment at 631 to 647 (ILGMVWAGFAMIIVASY) threads the bilayer. Residues 648–812 (TANLAAFLVL…NAPATLTFEN (165 aa)) are Extracellular-facing. A glycan (N-linked (GlcNAc...) asparagine) is linked at Asn674. Residues Ser688 and Asp732 each contribute to the glycine site. The cysteines at positions 744 and 798 are disulfide-linked. Asn771 carries an N-linked (GlcNAc...) asparagine glycan. Residues 813–833 (MAGVFMLVAGGIVAGIFLIFI) traverse the membrane as a helical segment. The Cytoplasmic portion of the chain corresponds to 834–938 (EIAYKRHKDA…LQLCSRHRES (105 aa)). Position 877 is a phosphoserine (Lys877). 4 positions are modified to phosphoserine; by PKC: Ser889, Ser890, Ser896, and Ser897. Residues 889 to 938 (SSFKRRRSSKDTSTGGGRGALQNQKDTVLPRRAIEREEGQLQLCSRHRES) form a disordered region. Residue Lys898 is modified to Phosphoserine. Residues 916–927 (VLPRRAIEREEG) are compositionally biased toward basic and acidic residues.

Belongs to the glutamate-gated ion channel (TC 1.A.10.1) family. NR1/GRIN1 subfamily. In terms of assembly, heterotetramer; the NMDAR subunits are modular and harbor tiered domains that function in concert to regulate opening and closing of the cation-selective ion channel pore. Forms heterotetrameric channels composed of two GluN1/zeta subunits (GRIN1), and two identical GluN2/epsilon subunits (GRIN2A, GRIN2B, GRIN2C or GRIN2D) or GluN3 subunits (GRIN3A or GRIN3B) (in vitro). Can also form heterotetrameric channels that contain at least two GluN1 subunits and at least two different GluN2 subunits (or a combination of one GluN2 and one GluN3 subunits) (in vitro). In vivo, the subunit composition may vary in function of the expression levels of the different subunits. Found in a complex with GRIN2A or GRIN2B, GRIN3A and PPP2CB. Found in a complex with GRIN2A or GRIN2B and GRIN3B;. Interacts with SNX27 (via PDZ domain); the interaction is required for recycling to the plasma membrane when endocytosed and prevent degradation in lysosomes. Interacts with DLG4 and MPDZ. Interacts with LRFN1 and LRFN2. Interacts with MYZAP. Found in a complex with DLG4 and PRR7. Found in a complex with GRIN2B and PRR7. Interacts with PRR7; the interaction is reduced following NMDA receptor activity. NMDA is probably regulated by C-terminal phosphorylation of an isoform of NR1 by PKC. Dephosphorylated on Ser-897 probably by protein phosphatase 2A (PPP2CB). Its phosphorylated state is influenced by the formation of the NMDAR-PPP2CB complex and the NMDAR channel activity. Detected throughout the brain, in brain cortex, cerebellum, thalamus and olfactory bulb.

It localises to the cell membrane. It is found in the postsynaptic cell membrane. Its subcellular location is the synaptic cell membrane. The protein resides in the postsynaptic density membrane. The catalysed reaction is Ca(2+)(in) = Ca(2+)(out). The enzyme catalyses Na(+)(in) = Na(+)(out). It carries out the reaction K(+)(in) = K(+)(out). NMDA glutamate receptor activity is potentiated by Zn2(+) in a dose-dependent fashion. The potentiating effect of Zn2(+) is at submicromolar concentrations and its inhibitory action is at high micromolar to millimolar concentrations. Excitatory glycine receptors are inhibited by D-serine at 100uM. Functionally, component of N-methyl-D-aspartate (NMDA) receptors (NMDARs) that function as heterotetrameric, ligand-gated cation channels with high calcium permeability and voltage-dependent block by Mg(2+). NMDARs participate in synaptic plasticity for learning and memory formation by contributing to the long-term potentiation (LTP). Channel activation requires binding of the neurotransmitter L-glutamate to the GluN2 subunit, glycine or D-serine binding to the GluN1 subunit, plus membrane depolarization to eliminate channel inhibition by Mg(2+). NMDARs mediate simultaneously the potasium efflux and the influx of calcium and sodium. Each GluN2 or GluN3 subunit confers differential attributes to channel properties, including activation, deactivation and desensitization kinetics, pH sensitivity, Ca2(+) permeability, and binding to allosteric modulators. Forms excitatory glycinergic receptor complexes with GluN3 alone which are activated by glycine binding to the GluN1 and GluN3 subunits. The protein is Glutamate receptor ionotropic, NMDA 1 of Rattus norvegicus (Rat).